Reading from the N-terminus, the 513-residue chain is Carotenoid isomerooxygenase (513 aa).

His184, His242, His312, and His503 together coordinate Fe cation.

This sequence belongs to the carotenoid oxygenase family. Fe(2+) is required as a cofactor.

The enzyme catalyses all-trans-zeaxanthin + O2 = (3R)-11-cis-3-hydroxyretinal + (3R)-all-trans-3-hydroxyretinal. Its pathway is cofactor metabolism; retinol metabolism. Its function is as follows. Catalyzes the oxidative cleavage at the 15,15'-double bond of carotenoids and the simultaneous all-trans to 11-cis isomerization of one cleavage product. Carotenoids like 11-cis retinal can promote visual pigment biogenesis in the dark. Essential for the biosynthesis of the 3-hydroxyretinal chromophore of rhodopsin from zeaxanthin and for proper photoreceptor development. The sequence is that of Carotenoid isomerooxygenase (ninaB) from Galleria mellonella (Greater wax moth).